The primary structure comprises 325 residues: Aldo-keto reductase family 1 member A1 (325 aa).

Thr2 is subject to N-acetylthreonine. A Phosphoserine modification is found at Ser4. Residues 11–20 (GQKMPLIGLG), Thr21, and Trp22 contribute to the NADP(+) site. Ser38 carries the post-translational modification Phosphoserine. Asp45 contacts NADP(+). The active-site Proton donor is Tyr50. Lys127 bears the N6-acetyllysine; alternate mark. Lys127 is subject to N6-succinyllysine; alternate. Lys145 carries the N6-succinyllysine modification. NADP(+) is bound by residues Ser162, Asn163, Ser211, Leu213, Ser215, Ser216, Lys263, Ser264, Ile265, Arg269, Gln272, and Asn273. Position 211 is a phosphoserine (Ser211).

It belongs to the aldo/keto reductase family. As to quaternary structure, monomer. As to expression, widely expressed.

It is found in the cytoplasm. It localises to the cytosol. The protein resides in the apical cell membrane. It carries out the reaction a primary alcohol + NADP(+) = an aldehyde + NADPH + H(+). The enzyme catalyses L-gulonate + NADP(+) = aldehydo-D-glucuronate + NADPH + H(+). The catalysed reaction is L-gulono-1,4-lactone + NADP(+) = D-glucurono-3,6-lactone + NADPH + H(+). It catalyses the reaction allyl alcohol + NADP(+) = acrolein + NADPH + H(+). It carries out the reaction glycerol + NADP(+) = D-glyceraldehyde + NADPH + H(+). The enzyme catalyses glycerol + NADP(+) = L-glyceraldehyde + NADPH + H(+). The catalysed reaction is hydroxyacetone + NADP(+) = methylglyoxal + NADPH + H(+). It catalyses the reaction 3-deoxyfructose + NADP(+) = 3-deoxyglucosone + NADPH + H(+). It carries out the reaction (R)-mevalonate + NADP(+) = (R)-mevaldate + NADPH + H(+). The enzyme catalyses pyridine 3-methanol + NADP(+) = pyridine-3-carbaldehyde + NADPH + H(+). The catalysed reaction is S-nitroso-CoA + NADPH + H(+) = sulfinamide-CoA + NADP(+). It catalyses the reaction S-nitrosoglutathione + NADPH + H(+) = S-(hydroxysulfenamide)glutathione + NADP(+). Catalyzes the NADPH-dependent reduction of a wide variety of carbonyl-containing compounds to their corresponding alcohols. Displays enzymatic activity towards endogenous metabolites such as aromatic and aliphatic aldehydes, ketones, monosaccharides and bile acids, with a preference for negatively charged substrates, such as glucuronate and succinic semialdehyde. Plays an important role in ascorbic acid biosynthesis by catalyzing the reduction of D-glucuronic acid and D-glucurono-gamma-lactone. Functions as a detoxifiying enzyme by reducing a range of toxic aldehydes. Reduces methylglyoxal and 3-deoxyglucosone, which are present at elevated levels under hyperglycemic conditions and are cytotoxic. Involved in the detoxification of lipid-derived aldehydes like acrolein. Plays a role in the activation of procarcinogens, such as polycyclic aromatic hydrocarbon trans-dihydrodiols, and in the metabolism of various xenobiotics and drugs. Also acts as an inhibitor of protein S-nitrosylation by mediating degradation of S-nitroso-coenzyme A (S-nitroso-CoA), a cofactor required to S-nitrosylate proteins. S-nitroso-CoA reductase activity is involved in reprogramming intermediary metabolism in renal proximal tubules, notably by inhibiting protein S-nitrosylation of isoform 2 of PKM (PKM2). Also acts as a S-nitroso-glutathione reductase by catalyzing the NADPH-dependent reduction of S-nitrosoglutathione. Displays no reductase activity towards retinoids. The protein is Aldo-keto reductase family 1 member A1 of Mus musculus (Mouse).